The sequence spans 564 residues: Eukaryotic translation initiation factor 3 subunit L (564 aa).

Serine 2 is modified (N-acetylserine). Serine 21 is subject to Phosphoserine. Residues 331-537 form the PCI domain; the sequence is DAIRVFANIL…IHIADTKVAR (207 aa). N6-acetyllysine is present on residues lysine 465 and lysine 549.

It belongs to the eIF-3 subunit L family. As to quaternary structure, component of the eukaryotic translation initiation factor 3 (eIF-3) complex, which is composed of 13 subunits: EIF3A, EIF3B, EIF3C, EIF3D, EIF3E, EIF3F, EIF3G, EIF3H, EIF3I, EIF3J, EIF3K, EIF3L and EIF3M. The eIF-3 complex appears to include 3 stable modules: module A is composed of EIF3A, EIF3B, EIF3G and EIF3I; module B is composed of EIF3F, EIF3H, and EIF3M; and module C is composed of EIF3C, EIF3D, EIF3E, EIF3K and EIF3L. EIF3C of module C binds EIF3B of module A and EIF3H of module B, thereby linking the three modules. EIF3J is a labile subunit that binds to the eIF-3 complex via EIF3B. The eIF-3 complex interacts with RPS6KB1 under conditions of nutrient depletion. Mitogenic stimulation leads to binding and activation of a complex composed of MTOR and RPTOR, leading to phosphorylation and release of RPS6KB1 and binding of EIF4B to eIF-3. Interacts with RRN3.

The protein resides in the cytoplasm. Component of the eukaryotic translation initiation factor 3 (eIF-3) complex, which is required for several steps in the initiation of protein synthesis. The eIF-3 complex associates with the 40S ribosome and facilitates the recruitment of eIF-1, eIF-1A, eIF-2:GTP:methionyl-tRNAi and eIF-5 to form the 43S pre-initiation complex (43S PIC). The eIF-3 complex stimulates mRNA recruitment to the 43S PIC and scanning of the mRNA for AUG recognition. The eIF-3 complex is also required for disassembly and recycling of post-termination ribosomal complexes and subsequently prevents premature joining of the 40S and 60S ribosomal subunits prior to initiation. The eIF-3 complex specifically targets and initiates translation of a subset of mRNAs involved in cell proliferation, including cell cycling, differentiation and apoptosis, and uses different modes of RNA stem-loop binding to exert either translational activation or repression. This is Eukaryotic translation initiation factor 3 subunit L from Pan troglodytes (Chimpanzee).